The primary structure comprises 269 residues: Ubiquinone/menaquinone biosynthesis C-methyltransferase UbiE (269 aa).

S-adenosyl-L-methionine is bound by residues Thr-92, Asp-113, and 141–142; that span reads NA.

This sequence belongs to the class I-like SAM-binding methyltransferase superfamily. MenG/UbiE family.

It catalyses the reaction a 2-demethylmenaquinol + S-adenosyl-L-methionine = a menaquinol + S-adenosyl-L-homocysteine + H(+). The catalysed reaction is a 2-methoxy-6-(all-trans-polyprenyl)benzene-1,4-diol + S-adenosyl-L-methionine = a 5-methoxy-2-methyl-3-(all-trans-polyprenyl)benzene-1,4-diol + S-adenosyl-L-homocysteine + H(+). It functions in the pathway quinol/quinone metabolism; menaquinone biosynthesis; menaquinol from 1,4-dihydroxy-2-naphthoate: step 2/2. The protein operates within cofactor biosynthesis; ubiquinone biosynthesis. Methyltransferase required for the conversion of demethylmenaquinol (DMKH2) to menaquinol (MKH2) and the conversion of 2-polyprenyl-6-methoxy-1,4-benzoquinol (DDMQH2) to 2-polyprenyl-3-methyl-6-methoxy-1,4-benzoquinol (DMQH2). This Brucella canis (strain ATCC 23365 / NCTC 10854 / RM-666) protein is Ubiquinone/menaquinone biosynthesis C-methyltransferase UbiE.